The primary structure comprises 403 residues: MKTIDELLAEGVDGKRVFVRADLNVPLADGLITDDGRIRAVLPTVKALAEAGAKVVVASHLGRPKGAPDPAFSLLPAAERLGELLGAPVAFAQDTVGPAAHDAVNGLQPGQVAVIENLRFNAGETSKDDAERGAFADRLAALADIYVGDGFGAVHRKHASVYDLPARLPHYAGYLIATEVNVLKKLTEDVKRPYVVALGGAKVSDKLAVIDQLLGKADRLLIGGGMAYTFLKAKGYEVGISLLQEDQIPTVKEYMERAEKNGVELVLPVDVLVSTEFPDLKTKAPANPTTVAADAIPADQEGLDIGPETRKLYASKLADAATVFWNGPMGVFEHPDYAEGTKAVAQALVDSQAFTVVGGGDSAAAVRILGFDETAFGHISTGGGASLEYLEGKTLPGLAALED.

Substrate-binding positions include 22–24 (DLN), Arg-37, 60–63 (HLGR), Arg-119, and Arg-156. ATP is bound by residues Lys-206, Gly-302, Glu-333, and 359–362 (GGDS).

The protein belongs to the phosphoglycerate kinase family. Monomer.

The protein resides in the cytoplasm. The enzyme catalyses (2R)-3-phosphoglycerate + ATP = (2R)-3-phospho-glyceroyl phosphate + ADP. It participates in carbohydrate degradation; glycolysis; pyruvate from D-glyceraldehyde 3-phosphate: step 2/5. This chain is Phosphoglycerate kinase, found in Streptomyces avermitilis (strain ATCC 31267 / DSM 46492 / JCM 5070 / NBRC 14893 / NCIMB 12804 / NRRL 8165 / MA-4680).